A 495-amino-acid chain; its full sequence is Trimethylamine methyltransferase MttB (495 aa).

Residue pyrrolysine 334 is a non-standard amino acid, pyrrolysine.

The protein belongs to the trimethylamine methyltransferase family.

The catalysed reaction is Co(I)-[trimethylamine-specific corrinoid protein] + trimethylamine + H(+) = methyl-Co(III)-[trimethylamine-specific corrinoid protein] + dimethylamine. The protein operates within one-carbon metabolism; methanogenesis from trimethylamine. Catalyzes the transfer of a methyl group from trimethylamine to the corrinoid cofactor of MttC. The polypeptide is Trimethylamine methyltransferase MttB (mttB) (Methanosarcina barkeri (strain Fusaro / DSM 804)).